A 189-amino-acid polypeptide reads, in one-letter code: UPF0301 protein PST_3956 (189 aa).

This sequence belongs to the UPF0301 (AlgH) family.

The chain is UPF0301 protein PST_3956 from Stutzerimonas stutzeri (strain A1501) (Pseudomonas stutzeri).